The sequence spans 485 residues: UDP-N-acetylmuramate--L-alanine ligase (485 aa).

129–135 (GTHGKTT) lines the ATP pocket.

Belongs to the MurCDEF family.

The protein localises to the cytoplasm. It carries out the reaction UDP-N-acetyl-alpha-D-muramate + L-alanine + ATP = UDP-N-acetyl-alpha-D-muramoyl-L-alanine + ADP + phosphate + H(+). The protein operates within cell wall biogenesis; peptidoglycan biosynthesis. Cell wall formation. In Vibrio parahaemolyticus serotype O3:K6 (strain RIMD 2210633), this protein is UDP-N-acetylmuramate--L-alanine ligase.